The chain runs to 712 residues: Polyribonucleotide nucleotidyltransferase (712 aa).

2 residues coordinate Mg(2+): D484 and D490. The region spanning 550–609 (PKYKTMDVNPEKIRVLIGPGGKNIKAIIEETGSDVEIQDSGVVNIFAPDTPTLDKTIKLI) is the KH domain. The S1 motif domain occupies 619-686 (GEVYDGIVKD…KGGKYSLSRK (68 aa)).

It belongs to the polyribonucleotide nucleotidyltransferase family. Requires Mg(2+) as cofactor.

The protein localises to the cytoplasm. It catalyses the reaction RNA(n+1) + phosphate = RNA(n) + a ribonucleoside 5'-diphosphate. In terms of biological role, involved in mRNA degradation. Catalyzes the phosphorolysis of single-stranded polyribonucleotides processively in the 3'- to 5'-direction. The polypeptide is Polyribonucleotide nucleotidyltransferase (Brachyspira hyodysenteriae (strain ATCC 49526 / WA1)).